Here is a 226-residue protein sequence, read N- to C-terminus: MKNALGWHCALGIIPYRDAWRWQQQLVAERRQNLAAPDVLLTLEHPAIYTLGQGATTAHIHFDPVATGIEVLRIERGGDVTYHCPGQLVAYPILNLRRHCCDLHWYLHQLEEVIIQTLRHYGIKGERVAGLTGVWVEGYKVAAIGIKVTRWISFHGIALNVVNDLKGFGRIVPCGIGDRPVGNLRQFCADIQLEDVRQQFVAAFSRVFGLEFAPKALADLLIPTSS.

The BPL/LPL catalytic domain maps to 34–212 (LAAPDVLLTL…AFSRVFGLEF (179 aa)). Substrate-binding positions include 76 to 83 (RGGDVTYH), 143 to 145 (AIG), and 156 to 158 (GIA). Cys174 serves as the catalytic Acyl-thioester intermediate.

Belongs to the LipB family.

The protein localises to the cytoplasm. The catalysed reaction is octanoyl-[ACP] + L-lysyl-[protein] = N(6)-octanoyl-L-lysyl-[protein] + holo-[ACP] + H(+). It participates in protein modification; protein lipoylation via endogenous pathway; protein N(6)-(lipoyl)lysine from octanoyl-[acyl-carrier-protein]: step 1/2. Its function is as follows. Catalyzes the transfer of endogenously produced octanoic acid from octanoyl-acyl-carrier-protein onto the lipoyl domains of lipoate-dependent enzymes. Lipoyl-ACP can also act as a substrate although octanoyl-ACP is likely to be the physiological substrate. The sequence is that of Octanoyltransferase from Thermosynechococcus vestitus (strain NIES-2133 / IAM M-273 / BP-1).